The primary structure comprises 1045 residues: FERM, ARHGEF and pleckstrin domain-containing protein 1 (1045 aa).

The disordered stretch occupies residues 1–37; the sequence is MGEIEQRPTPGSRLGAPENSGISTLERGQKPPPTPSG. A phosphoserine mark is found at Ser-20 and Ser-23. Position 24 is a phosphothreonine (Thr-24). An FERM domain is found at 40–320; sequence VSIKIQMLDD…EHHAFFRLFE (281 aa). Phosphoserine occurs at positions 340, 373, 389, 403, 418, 427, and 433. Positions 361-534 are disordered; it reads FERKHSKIHS…TDDEDEGRRK (174 aa). Positions 373–396 are enriched in polar residues; it reads SLASQPTELNSEVLEQSQQSTSLT. 2 stretches are compositionally biased toward polar residues: residues 471–489 and 496–511; these read TGSL…NSQG and VTLS…QASP. Phosphoserine occurs at positions 510 and 514. Positions 540–730 constitute a DH domain; it reads KAYFIAKEVS…TEMVAQLHGT (191 aa). The 98-residue stretch at 759 to 856 folds into the PH 1 domain; that stretch reads EFIRLGSLSK…WVEDIQMAID (98 aa). Phosphoserine is present on residues Ser-833, Ser-872, and Ser-878. A disordered region spans residues 864 to 903; that stretch reads PAPEFLASSPPDNKSPDEATAADQESEDDLSASRTSLERQ. Position 883 is a phosphothreonine (Thr-883). Phosphoserine is present on residues Ser-889, Ser-896, and Ser-899. Residues 932 to 1029 form the PH 2 domain; it reads ENQLSGNLLR…WMEVIRSATS (98 aa).

Interacts with CADM1. Interacts with RAC1. Detected in cAMP-treated chondrocytes, but not in untreated chondrocytes. Detected in fetal brain, heart and spleen, and in adult testis, kidney and lung.

It is found in the cell membrane. It localises to the synapse. Its subcellular location is the synaptosome. The protein resides in the cytoplasm. The protein localises to the cytosol. It is found in the cell projection. It localises to the filopodium. Its subcellular location is the dendrite. The protein resides in the dendritic spine. Its function is as follows. Functions as a guanine nucleotide exchange factor for RAC1. May play a role in semaphorin signaling. Plays a role in the assembly and disassembly of dendritic filopodia, the formation of dendritic spines, regulation of dendrite length and ultimately the formation of synapses. This is FERM, ARHGEF and pleckstrin domain-containing protein 1 (FARP1) from Homo sapiens (Human).